The primary structure comprises 125 residues: Acidic phospholipase A2 5 (125 aa).

Ser1 is a signal peptide. The propeptide occupies 2–7 (NRPMPL). 8 cysteine pairs are disulfide-bonded: Cys18/Cys77, Cys33/Cys124, Cys35/Cys50, Cys37/Cys54, Cys49/Cys105, Cys56/Cys98, Cys66/Cys91, and Cys84/Cys96. Phe28 is a binding site for N-acetyl-beta-D-glucosamine. Asp30 is a Zn(2+) binding site. Ca(2+)-binding residues include Tyr34 and Gly36. N-acetyl-beta-D-glucosamine contacts are provided by His53 and Lys69. Residue His53 is part of the active site. Glu76 is a binding site for Zn(2+). Asp99 is a catalytic residue. Residue Asn117 coordinates Zn(2+).

As to quaternary structure, heterodimer formed between isoform 5 and isoform 6 in presence of zinc ion and monomer in absence of zinc ion. The cofactor is Ca(2+). Expressed by the venom gland.

It localises to the secreted. It carries out the reaction a 1,2-diacyl-sn-glycero-3-phosphocholine + H2O = a 1-acyl-sn-glycero-3-phosphocholine + a fatty acid + H(+). Functionally, PLA2 catalyzes the calcium-dependent hydrolysis of the 2-acyl groups in 3-sn-phosphoglycerides. The polypeptide is Acidic phospholipase A2 5 (Naja sagittifera (Andaman cobra)).